We begin with the raw amino-acid sequence, 151 residues long: Sperm surface protein Sp17 (151 aa).

Residues 68–98 are compositionally biased toward basic and acidic residues; it reads FYNNHAFEEQEPPEKSDPKQEESQIPGKEEE. Disordered regions lie at residues 68 to 115 and 130 to 151; these read FYNN…EKEE and AREE…EENK. The IQ domain maps to 114–143; the sequence is EEVAAVKIQAAFRGHVAREEVKKMKTDSLQ.

As to quaternary structure, homodimer. May interact with ROPN1. In terms of tissue distribution, testis- and sperm-specific.

It is found in the membrane. Sperm surface zona pellucida binding protein. Helps to bind spermatozoa to the zona pellucida with high affinity. Might function in binding zona pellucida and carbohydrates. This is Sperm surface protein Sp17 (SPA17) from Macaca fascicularis (Crab-eating macaque).